Consider the following 113-residue polypeptide: Protein FAM27E3 (113 aa).

Residues 1 to 113 (MGIFQLLRDR…YTHRHTHRVL (113 aa)) are disordered. Over residues 77–99 (QTDRERERNTQRLRDRERRENGR) the composition is skewed to basic and acidic residues. Residues 100-113 (HTHTYTHRHTHRVL) show a composition bias toward basic residues.

The protein belongs to the FAM27 family.

This is Protein FAM27E3 (FAM27E3) from Homo sapiens (Human).